The following is a 67-amino-acid chain: Putative sodium channel alpha-toxin Acra7 (67 aa).

The LCN-type CS-alpha/beta domain maps to 2 to 66 (RDGYIVKPTN…PIKDPNQDCT (65 aa)). Intrachain disulfides connect cysteine 12–cysteine 65, cysteine 16–cysteine 37, cysteine 23–cysteine 47, and cysteine 27–cysteine 49. Position 67 (arginine 67) is a propeptide, removed by a carboxypeptidase.

This sequence belongs to the long (4 C-C) scorpion toxin superfamily. Sodium channel inhibitor family. Alpha subfamily. In terms of tissue distribution, expressed by the venom gland.

Its subcellular location is the secreted. Its function is as follows. Alpha toxins bind voltage-independently at site-3 of sodium channels (Nav) and inhibit the inactivation of the activated channels, thereby blocking neuronal transmission. In Androctonus crassicauda (Arabian fat-tailed scorpion), this protein is Putative sodium channel alpha-toxin Acra7.